The chain runs to 511 residues: 2-isopropylmalate synthase (511 aa).

Residues 6 to 269 (IIIFDTTLRD…YTDIKCENIF (264 aa)) enclose the Pyruvate carboxyltransferase domain. The Mn(2+) site is built by Asp-15, His-203, His-205, and Asn-239. The interval 394-511 (VIEKLSVISG…SLKVEERKMA (118 aa)) is regulatory domain.

Belongs to the alpha-IPM synthase/homocitrate synthase family. LeuA type 1 subfamily. In terms of assembly, homodimer. Requires Mn(2+) as cofactor.

It localises to the cytoplasm. The catalysed reaction is 3-methyl-2-oxobutanoate + acetyl-CoA + H2O = (2S)-2-isopropylmalate + CoA + H(+). The protein operates within amino-acid biosynthesis; L-leucine biosynthesis; L-leucine from 3-methyl-2-oxobutanoate: step 1/4. Functionally, catalyzes the condensation of the acetyl group of acetyl-CoA with 3-methyl-2-oxobutanoate (2-ketoisovalerate) to form 3-carboxy-3-hydroxy-4-methylpentanoate (2-isopropylmalate). This chain is 2-isopropylmalate synthase, found in Campylobacter jejuni (strain RM1221).